A 211-amino-acid polypeptide reads, in one-letter code: Probable septum site-determining protein MinC (211 aa).

The protein belongs to the MinC family. Interacts with MinD and FtsZ.

In terms of biological role, cell division inhibitor that blocks the formation of polar Z ring septums. Rapidly oscillates between the poles of the cell to destabilize FtsZ filaments that have formed before they mature into polar Z rings. Prevents FtsZ polymerization. The polypeptide is Probable septum site-determining protein MinC (Clostridium perfringens (strain 13 / Type A)).